A 226-amino-acid polypeptide reads, in one-letter code: Large ribosomal subunit protein uL1 (226 aa).

Belongs to the universal ribosomal protein uL1 family. In terms of assembly, part of the 50S ribosomal subunit.

Functionally, binds directly to 23S rRNA. The L1 stalk is quite mobile in the ribosome, and is involved in E site tRNA release. Protein L1 is also a translational repressor protein, it controls the translation of the L11 operon by binding to its mRNA. In Buchnera aphidicola subsp. Cinara cedri (strain Cc), this protein is Large ribosomal subunit protein uL1.